The following is a 605-amino-acid chain: Pyruvate decarboxylase 1 (605 aa).

Residues aspartate 67 and histidine 154 each contribute to the substrate site. The thiamine pyrophosphate binding stretch occupies residues 432–514 (DSWFNCQKLR…FLINNGGYTI (83 aa)). Residues aspartate 482, asparagine 509, and glycine 511 each contribute to the Mg(2+) site. Glutamate 515 is a substrate binding site.

Belongs to the TPP enzyme family. In terms of assembly, homotetramer. A metal cation serves as cofactor. It depends on thiamine diphosphate as a cofactor.

The enzyme catalyses a 2-oxocarboxylate + H(+) = an aldehyde + CO2. This chain is Pyruvate decarboxylase 1 (PDC1), found in Oryza sativa subsp. japonica (Rice).